We begin with the raw amino-acid sequence, 363 residues long: Aminomethyltransferase (363 aa).

Belongs to the GcvT family. In terms of assembly, the glycine cleavage system is composed of four proteins: P, T, L and H.

It catalyses the reaction N(6)-[(R)-S(8)-aminomethyldihydrolipoyl]-L-lysyl-[protein] + (6S)-5,6,7,8-tetrahydrofolate = N(6)-[(R)-dihydrolipoyl]-L-lysyl-[protein] + (6R)-5,10-methylene-5,6,7,8-tetrahydrofolate + NH4(+). In terms of biological role, the glycine cleavage system catalyzes the degradation of glycine. The polypeptide is Aminomethyltransferase (Staphylococcus epidermidis (strain ATCC 35984 / DSM 28319 / BCRC 17069 / CCUG 31568 / BM 3577 / RP62A)).